The following is a 396-amino-acid chain: Elongation factor Tu 1 (396 aa).

The tr-type G domain occupies 10–206 (KPHVNVGTIG…ALDSYIPLPE (197 aa)). The tract at residues 19 to 26 (GHVDHGKT) is G1. 19–26 (GHVDHGKT) is a binding site for GTP. Residue Thr-26 participates in Mg(2+) binding. A G2 region spans residues 60–64 (GITIN). The interval 81–84 (DCPG) is G3. GTP-binding positions include 81–85 (DCPGH) and 136–139 (NKCD). The G4 stretch occupies residues 136–139 (NKCD). Positions 174-176 (SAK) are G5.

It belongs to the TRAFAC class translation factor GTPase superfamily. Classic translation factor GTPase family. EF-Tu/EF-1A subfamily. In terms of assembly, monomer.

The protein resides in the cytoplasm. The enzyme catalyses GTP + H2O = GDP + phosphate + H(+). Its function is as follows. GTP hydrolase that promotes the GTP-dependent binding of aminoacyl-tRNA to the A-site of ribosomes during protein biosynthesis. In Albidiferax ferrireducens (strain ATCC BAA-621 / DSM 15236 / T118) (Rhodoferax ferrireducens), this protein is Elongation factor Tu 1.